A 449-amino-acid polypeptide reads, in one-letter code: L10-interacting MYB domain-containing protein (449 aa).

One can recognise a Myb-like domain in the interval 162–225 (SNPQTKGYWS…YTRPQLKNHW (64 aa)). The tract at residues 297-324 (TYTPPSRSRKKLLHNRSESPQWRDTTPL) is disordered. Residues 314-324 (ESPQWRDTTPL) show a composition bias toward polar residues.

Interacts with RPL10A. In terms of tissue distribution, expressed in seedlings, leaves, roots, stems and flowers.

Its subcellular location is the nucleus. Its function is as follows. Transcriptional repressor that associates with ribosomal protein promoters. The chain is L10-interacting MYB domain-containing protein from Arabidopsis thaliana (Mouse-ear cress).